A 79-amino-acid polypeptide reads, in one-letter code: Large ribosomal subunit protein uL24 (79 aa).

This sequence belongs to the universal ribosomal protein uL24 family. As to quaternary structure, part of the 50S ribosomal subunit.

One of two assembly initiator proteins, it binds directly to the 5'-end of the 23S rRNA, where it nucleates assembly of the 50S subunit. Its function is as follows. One of the proteins that surrounds the polypeptide exit tunnel on the outside of the subunit. This chain is Large ribosomal subunit protein uL24, found in Aliarcobacter butzleri (strain RM4018) (Arcobacter butzleri).